The sequence spans 176 residues: Ribosome rescue factor SmrB (176 aa).

The 76-residue stretch at 93 to 168 (LDLHGYRQSE…GDAALLVLID (76 aa)) folds into the Smr domain.

The protein belongs to the SmrB family. As to quaternary structure, associates with collided ribosomes, but not with correctly translating polysomes.

Functionally, acts as a ribosome collision sensor. Detects stalled/collided disomes (pairs of ribosomes where the leading ribosome is stalled and a second ribosome has collided with it) and endonucleolytically cleaves mRNA at the 5' boundary of the stalled ribosome. Stalled/collided disomes form a new interface (primarily via the 30S subunits) that binds SmrB. Cleaved mRNA becomes available for tmRNA ligation, leading to ribosomal subunit dissociation and rescue of stalled ribosomes. The sequence is that of Ribosome rescue factor SmrB from Shewanella putrefaciens (strain CN-32 / ATCC BAA-453).